A 452-amino-acid chain; its full sequence is Glycine receptor subunit alpha-2 (452 aa).

Residues 1–27 (MYRQLVNILTALFAFFLGTNHFREAFC) form the signal peptide. Topologically, residues 28-256 (KDHDSRSGKH…KFHLERQMGY (229 aa)) are extracellular. Asn-72 carries N-linked (GlcNAc...) asparagine glycosylation. Arg-99 contributes to the glycine binding site. Arg-99 is a strychnine binding site. Asn-103 is a glycosylation site (N-linked (GlcNAc...) asparagine). Ser-163 serves as a coordination point for glycine. A disulfide bond links Cys-172 and Cys-186. Residues Glu-226 and Glu-228 each contribute to the Zn(2+) site. A disulfide bridge links Cys-232 with Cys-243. Thr-238 serves as a coordination point for glycine. His-249 provides a ligand contact to Zn(2+). The helical transmembrane segment at 257–278 (YLIQMYIPSLLIVILSWVSFWI) threads the bilayer. The Cytoplasmic segment spans residues 279–283 (NMDAA). The helical transmembrane segment at 284-304 (PARVALGITTVLTMTTQSSGS) threads the bilayer. Topologically, residues 305–315 (RASLPKVSYVK) are extracellular. A helical membrane pass occupies residues 316 to 336 (AIDIWMAVCLLFVFAALLEYA). Over 337–420 (AVNFVSRQHK…FVDRAKRIDT (84 aa)) the chain is Cytoplasmic. Residues 421-441 (ISRAAFPLAFLIFNIFYWITY) form a helical membrane-spanning segment. Topologically, residues 442-452 (KIIRHEDVHKK) are extracellular.

This sequence belongs to the ligand-gated ion channel (TC 1.A.9) family. Glycine receptor (TC 1.A.9.3) subfamily. GLRA2 sub-subfamily. Interacts with GLRB. Heteropentamer composed of GLRA2 and GLRB; functional GLRB-GLRA2 heteropentamers contain four GLRA2 subunits and one GLRB subunit, although alternative subunit composition cannot be excluded. Homopentamer (in vitro). Both homopentamers and heteropentamers form functional ion channels, but their characteristics are subtly different. As to expression, detected in the retina inner plexiform layer (at protein level). Detected in neonate retina. Detected in brain. Detected in spinal cord, with higher levels in the dorsal horn.

The protein resides in the postsynaptic cell membrane. It localises to the synapse. It is found in the cell membrane. Its subcellular location is the cell projection. The catalysed reaction is chloride(in) = chloride(out). Its activity is regulated as follows. Channel opening is triggered by extracellular glycine. Channel opening is also triggered by taurine and beta-alanine. Inhibited by strychnine. Inhibited by picrotoxin. Subunit of heteromeric glycine-gated chloride channels. Plays a role in synaptic plasticity. Contributes to the generation of inhibitory postsynaptic currents, and is involved in the down-regulation of neuronal excitability. Plays a role in cellular responses to ethanol. This Mus musculus (Mouse) protein is Glycine receptor subunit alpha-2.